Reading from the N-terminus, the 277-residue chain is uncharacterized protein (277 aa).

This is an uncharacterized protein from Acanthamoeba polyphaga mimivirus (APMV).